Reading from the N-terminus, the 206-residue chain is MARGKFITFEGIDGAGKTTHLQWFCDRLQERLGPTGRHVVVTREPGGTQLGETLREILLNQPMDLETEALLMFAGRREHLALVIEPALARGDWVVSDRFTDATFAYQGGGRGLPRDKLEALERWVQGGFQPDLTVLFDVQPQVASARRGAVRMPDKFESESDAFFARTRAEYLRRAHEAPHRFAIVDSSESIPQIRRQLEGVLAAL.

11-18 (GIDGAGKT) lines the ATP pocket.

This sequence belongs to the thymidylate kinase family.

It catalyses the reaction dTMP + ATP = dTDP + ADP. Its function is as follows. Phosphorylation of dTMP to form dTDP in both de novo and salvage pathways of dTTP synthesis. This Burkholderia pseudomallei (strain 1106a) protein is Thymidylate kinase.